A 244-amino-acid polypeptide reads, in one-letter code: Glucosamine-6-phosphate deaminase (244 aa).

D67 (proton acceptor; for enolization step) is an active-site residue. N136 functions as the For ring-opening step in the catalytic mechanism. H138 functions as the Proton acceptor; for ring-opening step in the catalytic mechanism. The For ring-opening step role is filled by E143.

The protein belongs to the glucosamine/galactosamine-6-phosphate isomerase family. NagB subfamily.

It carries out the reaction alpha-D-glucosamine 6-phosphate + H2O = beta-D-fructose 6-phosphate + NH4(+). Its pathway is amino-sugar metabolism; N-acetylneuraminate degradation; D-fructose 6-phosphate from N-acetylneuraminate: step 5/5. In terms of biological role, catalyzes the reversible isomerization-deamination of glucosamine 6-phosphate (GlcN6P) to form fructose 6-phosphate (Fru6P) and ammonium ion. The polypeptide is Glucosamine-6-phosphate deaminase (Clostridium botulinum (strain ATCC 19397 / Type A)).